A 701-amino-acid polypeptide reads, in one-letter code: MNPVIKKFQFGQSTVTLETGRIARQASGAVLVTVDDDVSVLVTVVGAKQADAGKGFFPLSVHYQEKTYAAGKIPGGFFKREGRPSEKETLTSRLIDRPIRPLFPEGFMNEVQVVCTVVSTSKKIDPDIAAMIGTSAALAISGIPFDGPVGAARVAFHESTGYLLNPTYEQLQASSLDMVVAGTSEAVLMVESEAKELTEDQMLGAVLFAHDEFQVVINAIKELAAEAAKPTWDWQPKPEATALLGAIRAEFGDAISQAYTITVKADRYARLGELKDQVVAKLAVEEGSPSAGEVKAAFGEIEYRTVRENIVNGKPRIDGRDTRTVRPLNIEVGVLPKTHGSALFTRGETQALVVATLGTARDAQLLDTLEGEKKDPFMLHYNFPPFSVGECGRMGGAGRREIGHGRLARRSVQAMLPGADVFPYTIRVVSEITESNGSSSMASVCGASLALMDAGVPMKAPVAGIAMGLVKEGEKFAILTDILGDEDHLGDMDFKVAGTSKGVTALQMDIKIKGITEEIMEIALGQALEARLNILGQMNQIIGQSRNELSANAPTMIAMKIDTDKIRDVIGKGGATIRAICEETKASIDIEDDGSIKIFGESKEAAEAARQRVLGITAEAEIGKIYLGKVERIVDFGAFVNILPGKDGLVHISMLSDARVEKVTDILKEGEEVEVLVLDVDNRGRIKLSIKDVAAAKASGV.

Mg(2+)-binding residues include Asp-487 and Asp-493. Positions 554-613 (PTMIAMKIDTDKIRDVIGKGGATIRAICEETKASIDIEDDGSIKIFGESKEAAEAARQRV) constitute a KH domain. Positions 623–691 (GKIYLGKVER…NRGRIKLSIK (69 aa)) constitute an S1 motif domain.

Belongs to the polyribonucleotide nucleotidyltransferase family. In terms of assembly, component of the RNA degradosome, which is a multiprotein complex involved in RNA processing and mRNA degradation. Mg(2+) is required as a cofactor.

It localises to the cytoplasm. The enzyme catalyses RNA(n+1) + phosphate = RNA(n) + a ribonucleoside 5'-diphosphate. Functionally, involved in mRNA degradation. Catalyzes the phosphorolysis of single-stranded polyribonucleotides processively in the 3'- to 5'-direction. In Pseudomonas syringae pv. tomato (strain ATCC BAA-871 / DC3000), this protein is Polyribonucleotide nucleotidyltransferase.